Reading from the N-terminus, the 1185-residue chain is Chromosome partition protein Smc (1185 aa).

32–39 is an ATP binding site; that stretch reads PNGSGKSN. Positions 228–503 form a coiled coil; that stretch reads SRLVKKLTIA…LQAVQERYTN (276 aa). The interval 300-323 is disordered; it reads TQGQQGVDAERRQNQQSEQERLTA. Residues 307–320 show a composition bias toward basic and acidic residues; the sequence is DAERRQNQQSEQER. One can recognise an SMC hinge domain in the interval 519 to 637; it reads SGVAGAVSEL…VDTLDHAMAI (119 aa). Coiled-coil stretches lie at residues 675-928 and 989-1025; these read QQQQ…RRLE and AIDE…ADLD.

It belongs to the SMC family. As to quaternary structure, homodimer.

It localises to the cytoplasm. In terms of biological role, required for chromosome condensation and partitioning. The polypeptide is Chromosome partition protein Smc (Lactiplantibacillus plantarum (strain ATCC BAA-793 / NCIMB 8826 / WCFS1) (Lactobacillus plantarum)).